A 486-amino-acid polypeptide reads, in one-letter code: CREB-regulated transcription coactivator 1 homolog (486 aa).

The disordered stretch occupies residues 1–62; sequence MSNSNTPRKF…APMPIPQQGL (62 aa). The span at 9 to 23 shows a compositional bias: basic and acidic residues; it reads KFSEKIAILERKQNE. Residues 34-52 are compositionally biased toward polar residues; that stretch reads QVQSITHHPTDSSGSSTAT. Phosphoserine; by AMPK is present on serine 76. The segment at 103-166 is disordered; the sequence is PIQGHRSRSP…PPYNQPGQLV (64 aa). A compositionally biased stretch (pro residues) spans 144–160; the sequence is RTPPQHPQYTPYGPPYN. Serine 179 is subject to Phosphoserine; by AMPK. Disordered stretches follow at residues 214–278, 327–417, and 460–486; these read SMPG…QSPN, FNQD…SNSP, and APPQ…MLQN. 3 stretches are compositionally biased toward polar residues: residues 224-245, 387-402, and 461-475; these read PNSQ…QGSP, PESQ…QLDP, and PPQT…NNSF.

This sequence belongs to the TORC family. As to quaternary structure, interacts with crh-1. Post-translationally, phosphorylated by AMPK at Ser-76 and Ser-179. Dephosphorylated by tax-6, the catalytic subunit of calcineurin. In terms of tissue distribution, expressed throughout the intestine and in head and tail neurons. Expressed in octopaminergic RIC neurons.

The protein localises to the nucleus. The protein resides in the cytoplasm. Its subcellular location is the cytosol. In terms of biological role, transcriptional coactivator for crh-1, the homolog of vertebrate transcription factor CREB1. Regulates the transcription of metabolic genes and may have a role in mitochondrial dynamics and metabolism. Involved in modulation of lifespan. Through crh-1, counteracts the pro-lifespan-extension signals of AMPK both cell autonomously and, when expressed in neurons, at a systemic level, possibly using the catecholamine analog, octopamine, as a messenger. This is CREB-regulated transcription coactivator 1 homolog from Caenorhabditis elegans.